The following is a 102-amino-acid chain: A-type ATP synthase subunit F (102 aa).

Belongs to the V-ATPase F subunit family. As to quaternary structure, has multiple subunits with at least A(3), B(3), C, D, E, F, H, I and proteolipid K(x).

Its subcellular location is the cell membrane. Its function is as follows. Component of the A-type ATP synthase that produces ATP from ADP in the presence of a proton gradient across the membrane. The chain is A-type ATP synthase subunit F from Thermococcus kodakarensis (strain ATCC BAA-918 / JCM 12380 / KOD1) (Pyrococcus kodakaraensis (strain KOD1)).